The primary structure comprises 1037 residues: Caspase recruitment domain-containing protein 6 (1037 aa).

The residue at position 2 (Ala-2) is an N-acetylalanine. Residues 3 to 94 (TESTPSEIIE…QSAAICGLRH (92 aa)) enclose the CARD domain. Residue Ser-154 is modified to Phosphoserine. Disordered regions lie at residues 235 to 270 (DPEH…TSLS), 669 to 704 (VSSG…PIQE), and 887 to 1037 (RTSH…GGKH). Over residues 242–261 (DGEEDFENSETTEFSGEEPS) the composition is skewed to acidic residues. A compositionally biased stretch (low complexity) spans 690-699 (LKSSSKSQAL). Composition is skewed to polar residues over residues 911-928 (ASQQ…SNPA), 938-954 (KSSQ…TVKH), and 963-984 (VPSQ…QTKP). The residue at position 985 (Ser-985) is a Phosphoserine. The segment covering 994–1012 (PSQPWPPQSKPSQPRPPQP) has biased composition (pro residues). Residues 1023 to 1037 (KAHHSKAGQKRGGKH) are compositionally biased toward basic residues.

Its function is as follows. May be involved in apoptosis. The sequence is that of Caspase recruitment domain-containing protein 6 (CARD6) from Homo sapiens (Human).